Reading from the N-terminus, the 217-residue chain is GTP cyclohydrolase-2 (217 aa).

50 to 54 (RIHSE) lines the GTP pocket. Zn(2+) is bound by residues C55, C66, and C68. Residues Q71, 93 to 95 (EGR), and T115 each bind GTP. Residue D127 is the Proton acceptor of the active site. The active-site Nucleophile is the R129. The GTP site is built by T150 and K155.

Belongs to the GTP cyclohydrolase II family. The cofactor is Zn(2+).

It catalyses the reaction GTP + 4 H2O = 2,5-diamino-6-hydroxy-4-(5-phosphoribosylamino)-pyrimidine + formate + 2 phosphate + 3 H(+). The protein operates within cofactor biosynthesis; riboflavin biosynthesis; 5-amino-6-(D-ribitylamino)uracil from GTP: step 1/4. Functionally, catalyzes the conversion of GTP to 2,5-diamino-6-ribosylamino-4(3H)-pyrimidinone 5'-phosphate (DARP), formate and pyrophosphate. The chain is GTP cyclohydrolase-2 from Actinobacillus succinogenes (strain ATCC 55618 / DSM 22257 / CCUG 43843 / 130Z).